Consider the following 368-residue polypeptide: P2X receptor C (368 aa).

Topologically, residues 1–24 are cytoplasmic; sequence MLDWDSILAYNTIKVVRIRDRRLG. The helical transmembrane segment at 25–45 threads the bilayer; the sequence is ILHLIFMIAIISYVVIYSAII. Topologically, residues 46–368 are lumenal; that stretch reads KKGYLSIEEP…DKLYHNIEAL (323 aa). The segment at 282–295 is pore-forming motif; sequence RHAIRLIFIQTGVI.

Belongs to the P2X receptor family.

Its subcellular location is the contractile vacuole membrane. Its function is as follows. P2X receptors are ligand-gated ion channels that play a role in intracellular calcium signaling. ATP does not evoke inward currents in p2xC. Not essential for osmoregulation. The chain is P2X receptor C (p2xC) from Dictyostelium discoideum (Social amoeba).